The sequence spans 1115 residues: Calcium-transporting ATPase PAT1 (1115 aa).

The Stromal portion of the chain corresponds to 1–99 (MTGSHEMESI…SIVLDALSDH (99 aa)). The helical transmembrane segment at 100 to 120 (ILILLIVAAVVSIVLGSIDYT) threads the bilayer. Residues 121 to 126 (SDHPET) are Lumenal-facing. A helical membrane pass occupies residues 127-147 (GWIDGVAILVAVILVVGITSL). Over 148–235 (NDFKNQARFR…KGQPQDNMDP (88 aa)) the chain is Stromal. Residues 236–256 (FLISGSMVIEGFGTMLVTAVG) traverse the membrane as a helical segment. The Lumenal portion of the chain corresponds to 257 to 287 (VNSFNGKTMMGLRVASEDTPLQMKLSVLASR). A helical membrane pass occupies residues 288-308 (IGYFGMGAAILMLLIAIPKYF). Residues 309–328 (IQRKVHDIEITREDAQPIVQ) lie on the Stromal side of the membrane. Residues 329-349 (LVISAITIVVVAVPEGLPLAV) traverse the membrane as a helical segment. Over 350–735 (TMALAYGMMK…GRNIYDAICK (386 aa)) the chain is Lumenal. D385 serves as the catalytic 4-aspartylphosphate intermediate. D678 and D682 together coordinate Mg(2+). A helical membrane pass occupies residues 736–756 (FLQFQLTVNVVAVTVAFIGTL). Residues 757–832 (TSDVVEDKDN…GKNAPLITRS (76 aa)) are Stromal-facing. The interval 762–784 (EDKDNSSSSGSADKVTEEEPRQG) is disordered. A helical transmembrane segment spans residues 833 to 853 (MWKNIIGQAALQLAILFTILY). At 854-873 (QGHNIFQHFVPQAHGPIIKN) the chain is on the lumenal side. The helical transmembrane segment at 874–894 (GLHHYTLVFNCFVFLQLFNEI) threads the bilayer. Residues 895–913 (NARVLGSRTNPFKNFFNNP) are Stromal-facing. The chain crosses the membrane as a helical span at residues 914-934 (IFIAVMIFTLGVQIIFVTFGG). Over 935-943 (SATSTDSLY) the chain is Lumenal. A helical membrane pass occupies residues 944–964 (IVEWICCVVVGAISLPVGLLL). Residues 965–1115 (RKIPIREPVV…LHLPVNQINN (151 aa)) are Stromal-facing. The tract at residues 984 to 1056 (AVYTSPSPNP…IPSSSSNLVN (73 aa)) is disordered. The span at 1040-1053 (NDNINTPIPSSSSN) shows a compositional bias: low complexity.

It belongs to the cation transport ATPase (P-type) (TC 3.A.3) family. Type IIB subfamily.

It localises to the contractile vacuole membrane. It is found in the cell membrane. The catalysed reaction is Ca(2+)(in) + ATP + H2O = Ca(2+)(out) + ADP + phosphate + H(+). Calcium ATPase involved in Ca(2+) homeostasis as a component of the contractile vacuole complex. The protein is Calcium-transporting ATPase PAT1 (patA) of Dictyostelium discoideum (Social amoeba).